A 602-amino-acid polypeptide reads, in one-letter code: Aryl hydrocarbon receptor protein 1 (602 aa).

Residues 1-2 (MY) constitute a propeptide that is removed on maturation. The segment covering 1-12 (MYASKRRQRNFK) has biased composition (basic residues). A disordered region spans residues 1-28 (MYASKRRQRNFKRVRDPPKQLTNTNPSK). Short sequence motifs (nuclear localization signal) lie at residues 5–8 (KRRQ) and 28–33 (KRHRER). The bHLH domain maps to 18–71 (PKQLTNTNPSKRHRERLNGELETVAMLLPYDSSTISRLDKLSVLRLAVSFLQCK). 3 required for maintaining the overall integrity of the AHR:ARNT heterodimer and its transcriptional activity regions span residues 41–73 (VAML…CKAH), 133–141 (SLKSLGGFI), and 266–268 (ICV). The short motif at 55-63 (LDKLSVLRL) is the Nuclear export signal element. The PAS domain occupies 126 to 196 (ESNFEEISLK…QQLDSNFHIP (71 aa)). The interval 440–467 (STSNSLFPSVPVPTPTTTKANRRRKENS) is disordered.

As to quaternary structure, interacts with daf-21/hsp90. Interacts with aha-1. Expressed in many distinct neuronal cells including RMED, RMEV, RMEL and RMER. Functions in URX neurons to promote aggregation behavior.

Its subcellular location is the nucleus. In terms of biological role, probable ligand-activated transcriptional activator. Acts as a transcriptional regulator in GABAergic motor neuron cell fate specification and development. Promotes cell-type-specific expression of guanylate cyclase genes that have key roles in aggregation behavior and hyperoxia avoidance. Has no role in carbon dioxide avoidance. The chain is Aryl hydrocarbon receptor protein 1 from Caenorhabditis elegans.